The primary structure comprises 260 residues: Proteasome subunit alpha (260 aa).

It belongs to the peptidase T1A family. The 20S proteasome core is composed of 14 alpha and 14 beta subunits that assemble into four stacked heptameric rings, resulting in a barrel-shaped structure. The two inner rings, each composed of seven catalytic beta subunits, are sandwiched by two outer rings, each composed of seven alpha subunits. The catalytic chamber with the active sites is on the inside of the barrel. Has a gated structure, the ends of the cylinder being occluded by the N-termini of the alpha-subunits. Is capped at one or both ends by the proteasome regulatory ATPase, PAN.

The protein localises to the cytoplasm. Its activity is regulated as follows. The formation of the proteasomal ATPase PAN-20S proteasome complex, via the docking of the C-termini of PAN into the intersubunit pockets in the alpha-rings, triggers opening of the gate for substrate entry. Interconversion between the open-gate and close-gate conformations leads to a dynamic regulation of the 20S proteasome proteolysis activity. Functionally, component of the proteasome core, a large protease complex with broad specificity involved in protein degradation. This is Proteasome subunit alpha from Thermococcus gammatolerans (strain DSM 15229 / JCM 11827 / EJ3).